The primary structure comprises 334 residues: Delta(1)-pyrroline-2-carboxylate/Delta(1)-piperideine-2-carboxylate reductase (334 aa).

Ser44 (charge relay system) is an active-site residue. Residue His45 is the Proton donor of the active site. Residue Arg49 participates in substrate binding. Residue 117-121 (HFSAL) coordinates NADP(+). Thr157 contributes to the substrate binding site. 175 to 177 (DFA) is an NADP(+) binding site. 183 to 184 (RG) contributes to the substrate binding site. Glu185 serves as the catalytic Charge relay system. NADP(+) is bound by residues 226–227 (HK) and 301–307 (RLPSQRR).

It belongs to the LDH2/MDH2 oxidoreductase family. Homodimer.

It carries out the reaction L-pipecolate + NADP(+) = Delta(1)-piperideine-2-carboxylate + NADPH + H(+). The enzyme catalyses L-proline + NADP(+) = 1-pyrroline-2-carboxylate + NADPH + H(+). The catalysed reaction is cis-4-hydroxy-L-proline + NADP(+) = Delta(1)-pyrroline-(4S)-hydroxy-2-carboxylate + NADPH + 2 H(+). Its function is as follows. Catalyzes the reduction of both Delta(1)-pyrroline-2-carboxylate (Pyr2C) and Delta(1)-piperideine-2-carboxylate (Pip2C) to L-proline and L-pipecolate, respectively, using NADPH as the electron donor. Cannot use NADH instead of NADPH. Is likely involved in a degradation pathway that converts trans-3-hydroxy-L-proline (t3LHyp) to L-proline, which would allow P.aeruginosa to grow on t3LHyp as a sole carbon source. Can also catalyze the reverse oxidation reactions, albeit at a much lower rate. Is also able to use Delta(1)-pyrroline-(4S)-hydroxy-2-carboxylate (Pyr4SH2C) and cis-4-hydroxy-L-proline (c4LHyp) as substrates, and might be involved in the metabolism of c4LHyp, a compound which is generated by the hydroxylation of free L-proline in bacteria. The sequence is that of Delta(1)-pyrroline-2-carboxylate/Delta(1)-piperideine-2-carboxylate reductase from Pseudomonas aeruginosa (strain ATCC 15692 / DSM 22644 / CIP 104116 / JCM 14847 / LMG 12228 / 1C / PRS 101 / PAO1).